Here is a 600-residue protein sequence, read N- to C-terminus: Pyranose dehydrogenase (600 aa).

The first 25 residues, 1-25 (MFPRVVRLNSRLVSFALLGLQIANG), serve as a signal peptide directing secretion. N-linked (GlcNAc...) asparagine glycans are attached at residues N99 and N114. H127 carries the tele-8alpha-FAD histidine modification. 5 N-linked (GlcNAc...) asparagine glycosylation sites follow: N199, N275, N342, N399, and N507. Catalysis depends on H535, which acts as the Proton acceptor. An N-linked (GlcNAc...) asparagine glycan is attached at N546. The active site involves H579.

This sequence belongs to the GMC oxidoreductase family. In terms of assembly, monomer. FAD is required as a cofactor. In terms of processing, N-glycosylated.

It localises to the secreted. The catalysed reaction is pyranose + acceptor = pyranos-2-ulose + reduced acceptor.. The enzyme catalyses pyranose + acceptor = pyranos-3-ulose + reduced acceptor.. It carries out the reaction pyranose + acceptor = pyranos-2,3-diulose + reduced acceptor.. It catalyses the reaction a pyranoside + acceptor = a pyranosid-3-ulose + reduced acceptor.. The catalysed reaction is a pyranoside + acceptor = a pyranosid-3,4-diulose + reduced acceptor.. Its function is as follows. Catalyzes the single-oxidation or sequential double oxidation reaction of carbohydrates primarily at carbon-2 and/or carbon-3 with the concomitant reduction of the flavin. The enzyme exhibits a broad sugar substrate specificity, oxidizing different aldopyranoses to the corresponding C-1, C-2, C-3 or C-1,2, C-2,3 and C-3,4 (di)dehydro sugars with substrate-specific regioselectivity. Accepts only a narrow range of electron acceptors such as substituted benzoquinones and complexed metal ions and reacts extremely slowly with O(2) as acceptor. May play a role in the natural recycling of plant matter by oxidizing all major monosaccharides in lignocellulose and by reducing quinone compounds or reactive radical species generated during lignin depolymerization. In Agaricus xanthodermus (Poison yellow meadow mushroom), this protein is Pyranose dehydrogenase.